The following is a 112-amino-acid chain: Ribosome-binding factor A (112 aa).

Belongs to the RbfA family. In terms of assembly, monomer. Binds 30S ribosomal subunits, but not 50S ribosomal subunits or 70S ribosomes.

It localises to the cytoplasm. Functionally, one of several proteins that assist in the late maturation steps of the functional core of the 30S ribosomal subunit. Associates with free 30S ribosomal subunits (but not with 30S subunits that are part of 70S ribosomes or polysomes). Required for efficient processing of 16S rRNA. May interact with the 5'-terminal helix region of 16S rRNA. This chain is Ribosome-binding factor A, found in Ruthia magnifica subsp. Calyptogena magnifica.